The sequence spans 504 residues: Maturase K (504 aa).

The protein belongs to the intron maturase 2 family. MatK subfamily.

It is found in the plastid. The protein resides in the chloroplast. In terms of biological role, usually encoded in the trnK tRNA gene intron. Probably assists in splicing its own and other chloroplast group II introns. In Wollastonia biflora (Beach sunflower), this protein is Maturase K.